A 349-amino-acid polypeptide reads, in one-letter code: tRNA pseudouridine synthase D (349 aa).

Residue Phe-27 participates in substrate binding. Asp-80 acts as the Nucleophile in catalysis. Residue Asn-129 coordinates substrate. The TRUD domain occupies 155 to 303 (GVPNYFGAQR…VEAARRAMLL (149 aa)). Phe-329 provides a ligand contact to substrate.

This sequence belongs to the pseudouridine synthase TruD family.

It carries out the reaction uridine(13) in tRNA = pseudouridine(13) in tRNA. Responsible for synthesis of pseudouridine from uracil-13 in transfer RNAs. The polypeptide is tRNA pseudouridine synthase D (Escherichia coli O45:K1 (strain S88 / ExPEC)).